We begin with the raw amino-acid sequence, 536 residues long: MSAGEVERLVELSGGTGGDEEEEWLYGGPWDVHVHSDLAKDLDENEVERPEEENASANPPSGIEEEAAENGVAKPKVTETEDDSDSDSDDDEDDVHVTIGDIKTGAPQYGSYGTAPVNLNIKAGGRVYGNTGTKVKGVDLDAPGSINGVPLLEVDLDSFEDKPWRKPGADLSDYFNYGFNEDTWKAYCEKQKRIRMGLEVIPVTSTTNKITVQQGRTGNSEKEAALPSTKAEFTSPPSLFKTGLPPSRRLPGAIDVIGQTITISRVEGRRRANENSNIQVLSDRSATEVDNNFSKPPPFFPPGAPPTHLPPPPFLPPPPTVSTAPPLIPPPGFPPPPGAPPPSLIPTIESGHSSGYDSRSARAFPYGNVAFPHLTSSAPSWPSLVDTTKQWDYYARREKDRDRDRERDRDRERERDRDRERERTRERERERDHSPTPSVFNSDEERYRYREYAERGYERHRASREKEERHRERRHREKEETRHKSSRSNSRRRHESEEGDSHRRHKHKKSKRSKEGKEAGSEPVPEQESTEAAPAE.

2 stretches are compositionally biased toward basic and acidic residues: residues 1-10 (MSAGEVERLV) and 32-42 (VHVHSDLAKDL). 3 disordered regions span residues 1 to 95 (MSAG…EDDV), 212 to 246 (VQQGRTGNSEKEAALPSTKAEFTSPPSLFKTGLPP), and 300 to 536 (FPPG…APAE). The segment at 1-110 (MSAGEVERLV…DIKTGAPQYG (110 aa)) is sufficient for interaction with PAPOLA. Residues 1–296 (MSAGEVERLV…TEVDNNFSKP (296 aa)) form a necessary for stimulating PAPOLA activity region. 2 stretches are compositionally biased toward acidic residues: residues 43 to 54 (DENEVERPEEEN) and 80 to 94 (TEDDSDSDSDDDEDD). Serine 84, serine 86, and serine 88 each carry phosphoserine. Positions 136–219 (KGVDLDAPGS…ITVQQGRTGN (84 aa)) are sufficient for interaction with CPSF4. A compositionally biased stretch (pro residues) spans 300 to 344 (FPPGAPPTHLPPPPFLPPPPTVSTAPPLIPPPGFPPPPGAPPPSL). The residue at position 366 (tyrosine 366) is a Phosphotyrosine. Residues 374–390 (LTSSAPSWPSLVDTTKQ) show a composition bias toward polar residues. The interval 383 to 536 (SLVDTTKQWD…QESTEAAPAE (154 aa)) is sufficient for interaction with CPSF1 and CSTF3. A compositionally biased stretch (basic and acidic residues) spans 394-434 (YARREKDRDRDRERDRDRERERDRDRERERTRERERERDHS). The interval 397–432 (REKDRDRDRERDRDRERERDRDRERERTRERERERD) is arg/Asp/Glu-rich domain. Serine 434 carries the phosphoserine modification. Threonine 436 bears the Phosphothreonine mark. A phosphoserine mark is found at serine 438 and serine 442. Positions 443–470 (DEERYRYREYAERGYERHRASREKEERH) are enriched in basic and acidic residues. The span at 484–493 (KSSRSNSRRR) shows a compositional bias: basic residues. The residue at position 496 (serine 496) is a Phosphoserine. Over residues 502-512 (HRRHKHKKSKR) the composition is skewed to basic residues.

It belongs to the FIP1 family. In terms of assembly, component of the cleavage and polyadenylation specificity factor (CPSF) complex, composed of CPSF1, CPSF2, CPSF3, CPSF4 and FIP1L1. Found in a complex with CPSF1, FIP1L1 and PAPOLA. Interacts with CPSF1, CPSF4, CSTF2 and CSTF3. Interacts with AHCYL1 (when phosphorylated); the interaction is direct and associates AHCYL1 with the CPSF complex and RNA. Interacts with PAPOLA; the interaction seems to be increased by the interaction with AHCYL1. Interacts with NUDT21/CPSF5; this interaction occurs in a RNA sequence-specific manner. Interacts (preferentially via unphosphorylated form and Arg/Glu/Asp-rich domain) with CPSF6 (via Arg/Ser-rich domain); this interaction mediates, at least in part, the interaction between the CFIm and CPSF complexes and may be inhibited by CPSF6 hyper-phosphorylation. Interacts (preferentially via unphosphorylated form and Arg/Asp/Glu-rich domain) with CPSF7 (via Arg/Ser-rich domain); this interaction mediates, at least in part, the interaction between the CFIm and CPSF complexes and may be inhibited by CPSF7 hyper-phosphorylation.

It is found in the nucleus. Functionally, component of the cleavage and polyadenylation specificity factor (CPSF) complex that plays a key role in pre-mRNA 3'-end formation, recognizing the AAUAAA signal sequence and interacting with poly(A) polymerase and other factors to bring about cleavage and poly(A) addition. FIP1L1 contributes to poly(A) site recognition and stimulates poly(A) addition. Binds to U-rich RNA sequence elements surrounding the poly(A) site. May act to tether poly(A) polymerase to the CPSF complex. The polypeptide is Pre-mRNA 3'-end-processing factor FIP1 (Fip1l1) (Rattus norvegicus (Rat)).